We begin with the raw amino-acid sequence, 256 residues long: Pimeloyl-[acyl-carrier protein] methyl ester esterase (256 aa).

The AB hydrolase-1 domain occupies 15 to 242; sequence HLVLLHGWGL…AAHAPFISHP (228 aa). Substrate is bound by residues tryptophan 22, 82-83, and 143-147; these read SL and FLALQ. Serine 82 functions as the Nucleophile in the catalytic mechanism. Residues aspartate 207 and histidine 235 contribute to the active site. Histidine 235 provides a ligand contact to substrate.

This sequence belongs to the AB hydrolase superfamily. Carboxylesterase BioH family. Monomer.

It is found in the cytoplasm. It carries out the reaction 6-carboxyhexanoyl-[ACP] methyl ester + H2O = 6-carboxyhexanoyl-[ACP] + methanol + H(+). It participates in cofactor biosynthesis; biotin biosynthesis. Functionally, the physiological role of BioH is to remove the methyl group introduced by BioC when the pimeloyl moiety is complete. It allows to synthesize pimeloyl-ACP via the fatty acid synthetic pathway through the hydrolysis of the ester bonds of pimeloyl-ACP esters. The protein is Pimeloyl-[acyl-carrier protein] methyl ester esterase of Escherichia fergusonii (strain ATCC 35469 / DSM 13698 / CCUG 18766 / IAM 14443 / JCM 21226 / LMG 7866 / NBRC 102419 / NCTC 12128 / CDC 0568-73).